An 875-amino-acid chain; its full sequence is GATOR2 complex protein MIOS (875 aa).

WD repeat units follow at residues 58–100 (SDTP…NSKF), 111–155 (KHAR…TPDI), 182–221 (GQND…QKMF), 223–261 (NTKA…KPVL), 265–306 (EQPK…TPIG), and 395–437 (RLRA…KQYT). The C4-type zinc-finger motif lies at 735–781 (VSCNFCGKSISYSCSAVPHQGRGFSQYGVSGSPTKSKVTSCPGCRKP). Cysteine 737 and cysteine 740 together coordinate Zn(2+). 2 positions are modified to phosphoserine: serine 759 and serine 766. Zn(2+) contacts are provided by cysteine 775, cysteine 778, cysteine 788, cysteine 827, cysteine 830, histidine 832, histidine 835, histidine 838, cysteine 849, cysteine 854, and cysteine 858. The RING-type; atypical zinc finger occupies 782-863 (LPRCALCLIN…CTCKCMQLDT (82 aa)).

This sequence belongs to the WD repeat mio family. Component of the GATOR2 subcomplex, composed of MIOS, SEC13, SEH1L, WDR24 and WDR59. The GATOR2 complex interacts with CASTOR1 and CASTOR2; the interaction is negatively regulated by arginine. CASTOR1 and CASTOR2 convey leucine availability via direct interaction with MIOS. The GATOR2 complex interacts with SESN1, SESN2 and SESN3; the interaction is negatively regulated by amino acids. Interacts with SAR1A and SAR1B; the interaction is direct, disrupted by leucine and mediates the interaction of SAR1A or SAR1B with the GATOR2 complex to negatively regulate the TORC1 signaling upon leucine deprivation.

The protein resides in the lysosome membrane. Its activity is regulated as follows. The GATOR2 complex is negatively regulated by the upstream amino acid sensors CASTOR1 and SESN2, which sequester the GATOR2 complex in absence of amino acids. In the presence of abundant amino acids, GATOR2 is released from CASTOR1 and SESN2 and activated. Functionally, as a component of the GATOR2 complex, functions as an activator of the amino acid-sensing branch of the mTORC1 signaling pathway. The GATOR2 complex indirectly activates mTORC1 through the inhibition of the GATOR1 subcomplex. GATOR2 probably acts as an E3 ubiquitin-protein ligase toward GATOR1. In the presence of abundant amino acids, the GATOR2 complex mediates ubiquitination of the NPRL2 core component of the GATOR1 complex, leading to GATOR1 inactivation. In the absence of amino acids, GATOR2 is inhibited, activating the GATOR1 complex. Within the GATOR2 complex, MIOS is required to prevent autoubiquitination of WDR24, the catalytic subunit of the complex. The GATOR2 complex is required for brain myelination. The polypeptide is GATOR2 complex protein MIOS (Homo sapiens (Human)).